The chain runs to 317 residues: Porphobilinogen deaminase (317 aa).

The residue at position 245 (Cys245) is an S-(dipyrrolylmethanemethyl)cysteine.

The protein belongs to the HMBS family. Monomer. Requires dipyrromethane as cofactor.

It carries out the reaction 4 porphobilinogen + H2O = hydroxymethylbilane + 4 NH4(+). Its pathway is porphyrin-containing compound metabolism; protoporphyrin-IX biosynthesis; coproporphyrinogen-III from 5-aminolevulinate: step 2/4. The protein operates within porphyrin-containing compound metabolism; chlorophyll biosynthesis. Its function is as follows. Tetrapolymerization of the monopyrrole PBG into the hydroxymethylbilane pre-uroporphyrinogen in several discrete steps. In Synechococcus sp. (strain CC9902), this protein is Porphobilinogen deaminase.